The chain runs to 252 residues: Sensory transduction protein LytR (252 aa).

A Response regulatory domain is found at 2–116 (KALIVDDEPL…RINQAVNKVD (115 aa)). Position 53 is a 4-aspartylphosphate (D53). The HTH LytTR-type domain maps to 147 to 251 (LPIEVDERIH…MKTFKQQLGL (105 aa)).

Post-translationally, phosphorylated by LytS.

Its subcellular location is the cytoplasm. Member of the two-component regulatory system LytR/LytS that probably regulates genes involved in cell wall metabolism. This is Sensory transduction protein LytR (lytR) from Staphylococcus epidermidis (strain ATCC 12228 / FDA PCI 1200).